Reading from the N-terminus, the 1484-residue chain is Ral GTPase-activating protein subunit beta (1484 aa).

Disordered stretches follow at residues proline 355 to arginine 437 and glycine 697 to glutamate 728. At serine 359 the chain carries Phosphoserine. 2 positions are modified to phosphothreonine: threonine 363 and threonine 379. Composition is skewed to polar residues over residues serine 369–proline 381, asparagine 392–glutamate 428, and asparagine 701–proline 725. Residues serine 421 and serine 710 each carry the phosphoserine modification. Residue threonine 724 is modified to Phosphothreonine. The Rap-GAP domain maps to isoleucine 1138 to isoleucine 1382. A Phosphoserine modification is found at serine 1275. Residues aspartate 1301–proline 1325 form a disordered region. A compositionally biased stretch (low complexity) spans serine 1302 to serine 1313.

As to quaternary structure, component of the heterodimeric RalGAP1 complex with RALGAPA1 and of the heterodimeric RalGAP2 complex with RALGAPA2. Heterodimerization is required for activity. In terms of tissue distribution, detected in brain, thymus, lung, heart, spleen, liver and testis (at protein level).

In terms of biological role, non-catalytic subunit of the heterodimeric RalGAP1 and RalGAP2 complexes which act as GTPase activators for the Ras-like small GTPases RALA and RALB. This Rattus norvegicus (Rat) protein is Ral GTPase-activating protein subunit beta.